The primary structure comprises 155 residues: Cytochrome c-type biogenesis protein CcmE (155 aa).

Topologically, residues 1-8 are cytoplasmic; sequence MNPIRKKR. The helical; Signal-anchor for type II membrane protein transmembrane segment at 9 to 29 threads the bilayer; sequence LYWILALLCGVSIAMALALSA. Residues 30 to 155 are Periplasmic-facing; the sequence is LQENINLFYT…PKRVKQESTR (126 aa). Residues histidine 124 and tyrosine 128 each coordinate heme.

The protein belongs to the CcmE/CycJ family.

It is found in the cell inner membrane. Functionally, heme chaperone required for the biogenesis of c-type cytochromes. Transiently binds heme delivered by CcmC and transfers the heme to apo-cytochromes in a process facilitated by CcmF and CcmH. The sequence is that of Cytochrome c-type biogenesis protein CcmE from Janthinobacterium sp. (strain Marseille) (Minibacterium massiliensis).